We begin with the raw amino-acid sequence, 267 residues long: 4-hydroxy-tetrahydrodipicolinate reductase (267 aa).

NAD(+) contacts are provided by residues 8 to 13 (GAAGRM) and Asp-34. Position 35 (Arg-35) interacts with NADP(+). NAD(+) is bound by residues 98 to 100 (GTT) and 122 to 125 (AANF). The active-site Proton donor/acceptor is His-155. (S)-2,3,4,5-tetrahydrodipicolinate is bound at residue His-156. Lys-159 (proton donor) is an active-site residue. A (S)-2,3,4,5-tetrahydrodipicolinate-binding site is contributed by 165–166 (GT).

Belongs to the DapB family.

It is found in the cytoplasm. It carries out the reaction (S)-2,3,4,5-tetrahydrodipicolinate + NAD(+) + H2O = (2S,4S)-4-hydroxy-2,3,4,5-tetrahydrodipicolinate + NADH + H(+). It catalyses the reaction (S)-2,3,4,5-tetrahydrodipicolinate + NADP(+) + H2O = (2S,4S)-4-hydroxy-2,3,4,5-tetrahydrodipicolinate + NADPH + H(+). It functions in the pathway amino-acid biosynthesis; L-lysine biosynthesis via DAP pathway; (S)-tetrahydrodipicolinate from L-aspartate: step 4/4. In terms of biological role, catalyzes the conversion of 4-hydroxy-tetrahydrodipicolinate (HTPA) to tetrahydrodipicolinate. The polypeptide is 4-hydroxy-tetrahydrodipicolinate reductase (Pseudomonas amygdali pv. tabaci (Pseudomonas syringae pv. tabaci)).